The chain runs to 191 residues: Guanylate kinase (191 aa).

One can recognise a Guanylate kinase-like domain in the interval 9 to 187; it reads GQLIVITGPS…SLIALETAIF (179 aa). 16 to 23 provides a ligand contact to ATP; that stretch reads GPSGVGKG.

The protein belongs to the guanylate kinase family.

It is found in the cytoplasm. The catalysed reaction is GMP + ATP = GDP + ADP. In terms of biological role, essential for recycling GMP and indirectly, cGMP. The sequence is that of Guanylate kinase from Thermosynechococcus vestitus (strain NIES-2133 / IAM M-273 / BP-1).